A 460-amino-acid polypeptide reads, in one-letter code: MEINKIIEINNNNNNNNNKIIENNNDNKKIIEINNNNNDNNKIIEINDNNNNNIKDKILKKENKDSILMKPPPIFITPANKDDTITVFHQGHIISIPRKLKINLKSITDCGPDGVMFRAKNEDSKEEVIVKKISVFLMKDDKMARKLLRNLLFQRHFQQHPLVSTFQSVFKRKSSENYLISNKNNRNNVRLPLLQQKGDDDIYFEYLLPEFTLLQMIHNKLLTEYNIMIFLYQLLTVVKFMHSAGVIHRDIDPSAITIDQNQCLKLTEFYFCFPSNCPVDLFFNDYDTSSFIYRAPETIWRNTTYTTAIDVWNIGVIFGEMILGKRLFKTQDFEDHLISISKLIGNPTAEDLSIVLSKSIFQYMEKIPKSTLTPSVGIKRRFKGASKDQIELLQGMLCWDPRKRMTIDQLLAHKYFSTIHDESMQIKCNEIFNLKYYPDFYKMKSDLVKKSIENEFLTPC.

One can recognise a Protein kinase domain in the interval 102–416 (INLKSITDCG…IDQLLAHKYF (315 aa)). ATP-binding positions include Lys-131 and 154-162 (QRHFQQHPL). Asp-250 acts as the Proton acceptor in catalysis.

Belongs to the protein kinase superfamily. CMGC Ser/Thr protein kinase family. MAP kinase subfamily.

The enzyme catalyses L-seryl-[protein] + ATP = O-phospho-L-seryl-[protein] + ADP + H(+). The catalysed reaction is L-threonyl-[protein] + ATP = O-phospho-L-threonyl-[protein] + ADP + H(+). In Dictyostelium discoideum (Social amoeba), this protein is Probable serine/threonine-protein kinase kinase DDB_G0280557.